The sequence spans 89 residues: Small ribosomal subunit protein uS15 (89 aa).

Belongs to the universal ribosomal protein uS15 family. In terms of assembly, part of the 30S ribosomal subunit. Forms a bridge to the 50S subunit in the 70S ribosome, contacting the 23S rRNA.

One of the primary rRNA binding proteins, it binds directly to 16S rRNA where it helps nucleate assembly of the platform of the 30S subunit by binding and bridging several RNA helices of the 16S rRNA. Functionally, forms an intersubunit bridge (bridge B4) with the 23S rRNA of the 50S subunit in the ribosome. The sequence is that of Small ribosomal subunit protein uS15 from Allorhizobium ampelinum (strain ATCC BAA-846 / DSM 112012 / S4) (Agrobacterium vitis (strain S4)).